The sequence spans 489 residues: Amino acid transporter AVT6E (489 aa).

11 helical membrane-spanning segments follow: residues 76–96 (GIYG…IMAL), 102–122 (VLGL…SEIS), 156–176 (ICII…MGDV), 201–221 (VLIL…NKID), 227–247 (SAAS…VATI), 269–289 (ILDL…HFNV), 310–330 (ITTA…YLLF), 357–377 (IVRI…HFSL), 404–424 (VVLL…WTAF), 425–445 (KFTG…LIAL), and 461–481 (VSWL…IGNI).

It belongs to the amino acid/polyamine transporter 2 family. Amino acid/auxin permease (AAAP) (TC 2.A.18.6) subfamily.

Its subcellular location is the endoplasmic reticulum membrane. It is found in the vacuole membrane. The protein is Amino acid transporter AVT6E of Arabidopsis thaliana (Mouse-ear cress).